Here is a 579-residue protein sequence, read N- to C-terminus: Adenine deaminase (579 aa).

The protein belongs to the metallo-dependent hydrolases superfamily. Adenine deaminase family. Mn(2+) serves as cofactor.

It carries out the reaction adenine + H2O + H(+) = hypoxanthine + NH4(+). This Listeria innocua serovar 6a (strain ATCC BAA-680 / CLIP 11262) protein is Adenine deaminase.